The sequence spans 471 residues: MSKKYDAGVKEYRDTYWTPDYVPLDTDLLACFKCTGQEGVPKEEVAAAVAAESSTGTWSTVWSELLTDLDFYKGRCYRIEDVPGDKESFYAFIAYPLDLFEEGSITNVLTSLVGNVFGFKALRHLRLEDIRFPMAFIKSCYGPPNGIQVERDRMNKYGRPLLGCTIKPKLGLSGKNYGRVVYECLRGGLDFTKDDENINSQPFQRWQNRFEFVAEAIKLSEQETGERKGHYLNVTANTPEEMYERAEFAKELGMPIIMHDFITGGFTANTGLSKWCRKNGMLLHIHRAMHAVIDRHPKHGIHFRVLAKCLRLSGGDQLHTGTVVGKLEGDRQTTLGYIDQLRESFVPEDRSRGNFFDQDWGSMPGVFAVASGGIHVWHMPALVTIFGDDSVLQFGGGTHGHPWGSAAGAAANRVALEACVKARNAGRHLEKESRDILMEAGKHSPELAIALETWKEIKFEFDTVDKLDVQN.

Positions 115 and 165 each coordinate substrate. Lys167 functions as the Proton acceptor in the catalytic mechanism. Lys169 contacts substrate. Mg(2+) is bound by residues Lys193, Asp195, and Glu196. Residue Lys193 is modified to N6-carboxylysine. Catalysis depends on His286, which acts as the Proton acceptor. Residues Arg287, His319, and Ser371 each coordinate substrate.

This sequence belongs to the RuBisCO large chain family. Type I subfamily. Heterohexadecamer of 8 large chains and 8 small chains. The cofactor is Mg(2+).

It localises to the carboxysome. It carries out the reaction 2 (2R)-3-phosphoglycerate + 2 H(+) = D-ribulose 1,5-bisphosphate + CO2 + H2O. The catalysed reaction is D-ribulose 1,5-bisphosphate + O2 = 2-phosphoglycolate + (2R)-3-phosphoglycerate + 2 H(+). In terms of biological role, ruBisCO catalyzes two reactions: the carboxylation of D-ribulose 1,5-bisphosphate, the primary event in carbon dioxide fixation, as well as the oxidative fragmentation of the pentose substrate in the photorespiration process. Both reactions occur simultaneously and in competition at the same active site. The chain is Ribulose bisphosphate carboxylase large chain from Synechococcus sp. (strain WH7803).